Here is a 176-residue protein sequence, read N- to C-terminus: MDENSTLSPAHSDAAASSSANTPPLPYVPSALAPFAGLWRGEGEGAYPTIDDFAYTEEIEFAPTGKPFLAYRSRTREAGSGRPLHSESGFLRLVGEDEAELLVAQPTGFTEIHRGQVREGTIELSMVVLSASPDAKPVHSIRRQLSVRGGDLTYDLWMAHDLTPLTHHLHGHLRRD.

Positions 1–23 are disordered; the sequence is MDENSTLSPAHSDAAASSSANTP. Positions 8–20 are enriched in low complexity; the sequence is SPAHSDAAASSSA. A GXWXGXG motif is present at residues 37–43; sequence GLWRGEG. Heme b is bound at residue His-168.

Belongs to the nitrobindin family. Homodimer. It depends on heme b as a cofactor.

It catalyses the reaction peroxynitrite = nitrate. Its pathway is nitrogen metabolism. Its function is as follows. Heme-binding protein able to scavenge peroxynitrite and to protect free L-tyrosine against peroxynitrite-mediated nitration, by acting as a peroxynitrite isomerase that converts peroxynitrite to nitrate. Therefore, this protein likely plays a role in peroxynitrite sensing and in the detoxification of reactive nitrogen and oxygen species (RNS and ROS, respectively). Is able to bind nitric oxide (NO) in vitro, but may act as a sensor of peroxynitrite levels in vivo. The polypeptide is Peroxynitrite isomerase 1 (Rhodococcus jostii (strain RHA1)).